The chain runs to 261 residues: Small ribosomal subunit protein eS1 (261 aa).

Positions M1–K18 are enriched in basic residues. Residues M1 to P23 form a disordered region.

This sequence belongs to the eukaryotic ribosomal protein eS1 family. In terms of assembly, component of the small ribosomal subunit. Mature ribosomes consist of a small (40S) and a large (60S) subunit. The 40S subunit contains about 33 different proteins and 1 molecule of RNA (18S). The 60S subunit contains about 49 different proteins and 3 molecules of RNA (25S, 5.8S and 5S).

The protein resides in the cytoplasm. This chain is Small ribosomal subunit protein eS1 (cyc07), found in Nicotiana tabacum (Common tobacco).